We begin with the raw amino-acid sequence, 347 residues long: S-adenosylmethionine:tRNA ribosyltransferase-isomerase (347 aa).

This sequence belongs to the QueA family. As to quaternary structure, monomer.

It is found in the cytoplasm. The enzyme catalyses 7-aminomethyl-7-carbaguanosine(34) in tRNA + S-adenosyl-L-methionine = epoxyqueuosine(34) in tRNA + adenine + L-methionine + 2 H(+). It functions in the pathway tRNA modification; tRNA-queuosine biosynthesis. Transfers and isomerizes the ribose moiety from AdoMet to the 7-aminomethyl group of 7-deazaguanine (preQ1-tRNA) to give epoxyqueuosine (oQ-tRNA). This chain is S-adenosylmethionine:tRNA ribosyltransferase-isomerase, found in Halalkalibacterium halodurans (strain ATCC BAA-125 / DSM 18197 / FERM 7344 / JCM 9153 / C-125) (Bacillus halodurans).